Consider the following 105-residue polypeptide: Large ribosomal subunit protein uL24 (105 aa).

Belongs to the universal ribosomal protein uL24 family. As to quaternary structure, part of the 50S ribosomal subunit.

Functionally, one of two assembly initiator proteins, it binds directly to the 5'-end of the 23S rRNA, where it nucleates assembly of the 50S subunit. In terms of biological role, one of the proteins that surrounds the polypeptide exit tunnel on the outside of the subunit. The protein is Large ribosomal subunit protein uL24 of Pseudothermotoga lettingae (strain ATCC BAA-301 / DSM 14385 / NBRC 107922 / TMO) (Thermotoga lettingae).